The primary structure comprises 233 residues: Glucosamine-6-phosphate deaminase (233 aa).

The active-site Proton acceptor; for enolization step is the Asp-62. Asn-128 functions as the For ring-opening step in the catalytic mechanism. Catalysis depends on His-130, which acts as the Proton acceptor; for ring-opening step. Glu-135 serves as the catalytic For ring-opening step.

It belongs to the glucosamine/galactosamine-6-phosphate isomerase family. NagB subfamily.

The enzyme catalyses alpha-D-glucosamine 6-phosphate + H2O = beta-D-fructose 6-phosphate + NH4(+). The protein operates within amino-sugar metabolism; N-acetylneuraminate degradation; D-fructose 6-phosphate from N-acetylneuraminate: step 5/5. In terms of biological role, catalyzes the reversible isomerization-deamination of glucosamine 6-phosphate (GlcN6P) to form fructose 6-phosphate (Fru6P) and ammonium ion. The protein is Glucosamine-6-phosphate deaminase of Leuconostoc citreum (strain KM20).